A 434-amino-acid polypeptide reads, in one-letter code: F-box/LRR-repeat protein 21 (434 aa).

Positions 39–85 (LLDWGNLPHHVVLRIFQYLPLIDRARASSVCRRWNEVFHIPDLWRKF) constitute an F-box domain. LRR repeat units follow at residues 187 to 213 (DTPVDDPSLSILVANNSGTLRRLKMSS), 214 to 239 (CPHVSSNGILCVADHCQGLRELALNY), 242 to 265 (LSDKLLLALSNETHVNLEHLRIDV), 322 to 347 (GRSVSKEILGRLGLNCPRLTELVVCA), 349 to 374 (GIQVIDTELICIAEHCKNLTALGLSE), and 375 to 400 (CEVSCSAFIEFVRLCGRKLTHLSIME).

Part of the SCF (SKP1-CUL1-F-box) E3 ubiquitin-protein ligase complex SCF(FBXL21) composed of CUL1, SKP1, RBX1 and FBXL21. Interacts with CRY1 and CRY2.

Its subcellular location is the cytoplasm. It localises to the cytosol. The protein localises to the nucleus. The protein operates within protein modification; protein ubiquitination. Functionally, substrate-recognition component of the SCF(FBXL21) E3 ubiquitin ligase complex involved in circadian rhythm function. Plays a key role in the maintenance of both the speed and the robustness of the circadian clock oscillation. The SCF(FBXL21) complex mainly acts in the cytosol and mediates ubiquitination of CRY proteins (CRY1 and CRY2), leading to CRY proteins stabilization. The SCF(FBXL21) complex counteracts the activity of the SCF(FBXL3) complex and protects CRY proteins from degradation. Involved in the hypothalamic suprachiasmatic nucleus (SCN) clock regulating temporal organization of the daily activities. This chain is F-box/LRR-repeat protein 21 (FBXL21), found in Bos taurus (Bovine).